A 21-amino-acid chain; its full sequence is Cupiennin-6e (21 aa).

Ser21 bears the Serine amide mark.

Expressed by the venom gland.

The protein localises to the secreted. The protein is Cupiennin-6e of Cupiennius salei (American wandering spider).